The primary structure comprises 584 residues: Outer membrane transporter CdiB-2 (584 aa).

The signal sequence occupies residues 1-20 (MATRFAILPVTALITLTAQA). Over residues 24–44 (PTPNDQAAAARANAEQNQQAQ) the composition is skewed to low complexity. Positions 24 to 72 (PTPNDQAAAARANAEQNQQAQQRRDAQQRDATVQAPGVRSDVPRPEAYP) are disordered. In terms of domain architecture, POTRA spans 98–171 (SKAQGASALP…GALKLALIPG (74 aa)).

This sequence belongs to the TPS (TC 1.B.20) family.

It is found in the cell outer membrane. Potential outer membrane protein component of a toxin-immunity protein module, which functions as a cellular contact-dependent growth inhibition (CDI) system. CDI modules allow bacteria to communicate with and inhibit the growth of closely related neighboring bacteria in a contact-dependent fashion. This protein may be required for secretion and assembly of the CdiA toxin protein. Its function is as follows. Expression of this cdiAIB locus in B.thailandensis confers protection against other bacteria carrying the locus; growth inhibition requires cellular contact. Functionally, probable member of a two partner secretion pathway (TPS) in which it mediates the secretion of CdiA2. The sequence is that of Outer membrane transporter CdiB-2 (cdiB2) from Burkholderia pseudomallei (strain 1026b).